Reading from the N-terminus, the 318-residue chain is ADP-L-glycero-D-manno-heptose-6-epimerase (318 aa).

NADP(+)-binding positions include 10–11, 31–32, Lys38, Lys53, 80–84, and Asn97; these read FI, DD, and EGACS. Tyr144 functions as the Proton acceptor in the catalytic mechanism. Lys148 is an NADP(+) binding site. Position 173 (Asn173) interacts with substrate. NADP(+) contacts are provided by Val174 and Lys182. The Proton acceptor role is filled by Lys182. Substrate is bound by residues Lys184, His191, 205–208, Arg218, and Tyr282; that span reads FGAW.

The protein belongs to the NAD(P)-dependent epimerase/dehydratase family. HldD subfamily. As to quaternary structure, homopentamer. The cofactor is NADP(+).

The enzyme catalyses ADP-D-glycero-beta-D-manno-heptose = ADP-L-glycero-beta-D-manno-heptose. The protein operates within nucleotide-sugar biosynthesis; ADP-L-glycero-beta-D-manno-heptose biosynthesis; ADP-L-glycero-beta-D-manno-heptose from D-glycero-beta-D-manno-heptose 7-phosphate: step 4/4. Its function is as follows. Catalyzes the interconversion between ADP-D-glycero-beta-D-manno-heptose and ADP-L-glycero-beta-D-manno-heptose via an epimerization at carbon 6 of the heptose. The protein is ADP-L-glycero-D-manno-heptose-6-epimerase of Chromohalobacter salexigens (strain ATCC BAA-138 / DSM 3043 / CIP 106854 / NCIMB 13768 / 1H11).